A 248-amino-acid chain; its full sequence is 2,3-bisphosphoglycerate-dependent phosphoglycerate mutase (248 aa).

Substrate contacts are provided by residues 8-15 (RHGESLWN), 21-22 (TG), R60, 87-90 (EKHY), K98, 114-115 (RR), and 183-184 (GN). Residue H9 is the Tele-phosphohistidine intermediate of the active site. E87 (proton donor/acceptor) is an active-site residue.

This sequence belongs to the phosphoglycerate mutase family. BPG-dependent PGAM subfamily.

It carries out the reaction (2R)-2-phosphoglycerate = (2R)-3-phosphoglycerate. Its pathway is carbohydrate degradation; glycolysis; pyruvate from D-glyceraldehyde 3-phosphate: step 3/5. Catalyzes the interconversion of 2-phosphoglycerate and 3-phosphoglycerate. This is 2,3-bisphosphoglycerate-dependent phosphoglycerate mutase from Porphyromonas gingivalis (strain ATCC 33277 / DSM 20709 / CIP 103683 / JCM 12257 / NCTC 11834 / 2561).